The chain runs to 301 residues: MKHFLSIKELTQQQLLDLITLAKTIKANPAEYRHALDGKSVVMLFEKPSLRTRVSFDIGINKFGGHCLYLDQQNGALGKRESVADFASNLSCWADAIVARTYSHTTIEQLAEFGTVPVINALSDLYHPCQALADFLTLAEHFENISDVKLAYVGDGNNVTNSLMYCAAILGATMTVICPAGHFPDGYVVAEVQELASRYGGKIVLTSDIDAIEGHDAIYTDTWISMGDPTPLAEIKDKFAPYQVNNALMAKAGAHFFMHCLPAHRGVEVTDAVMDGECSLILQQAENRMHAQNAVLVTLFS.

Residues Arg-100 and 127–130 (HPCQ) contribute to the carbamoyl phosphate site. Residues Asn-158, Asp-221, and 225 to 226 (SM) each bind L-ornithine. Carbamoyl phosphate-binding positions include 260–261 (CL) and Arg-288.

This sequence belongs to the aspartate/ornithine carbamoyltransferase superfamily. OTCase family.

The protein localises to the cytoplasm. It carries out the reaction carbamoyl phosphate + L-ornithine = L-citrulline + phosphate + H(+). It functions in the pathway amino-acid biosynthesis; L-arginine biosynthesis; L-arginine from L-ornithine and carbamoyl phosphate: step 1/3. Reversibly catalyzes the transfer of the carbamoyl group from carbamoyl phosphate (CP) to the N(epsilon) atom of ornithine (ORN) to produce L-citrulline. This Shewanella oneidensis (strain ATCC 700550 / JCM 31522 / CIP 106686 / LMG 19005 / NCIMB 14063 / MR-1) protein is Ornithine carbamoyltransferase.